We begin with the raw amino-acid sequence, 117 residues long: 16 kDa protein (117 aa).

This chain is 16 kDa protein, found in Tobacco rattle virus (strain PLB).